The chain runs to 199 residues: Pyridoxal 5'-phosphate synthase subunit PdxT (199 aa).

Position 52–54 (glycine 52–serine 54) interacts with L-glutamine. Catalysis depends on cysteine 84, which acts as the Nucleophile. L-glutamine is bound by residues arginine 115 and isoleucine 143–arginine 144. Catalysis depends on charge relay system residues histidine 179 and glutamate 181.

This sequence belongs to the glutaminase PdxT/SNO family. In terms of assembly, in the presence of PdxS, forms a dodecamer of heterodimers. Only shows activity in the heterodimer.

The catalysed reaction is aldehydo-D-ribose 5-phosphate + D-glyceraldehyde 3-phosphate + L-glutamine = pyridoxal 5'-phosphate + L-glutamate + phosphate + 3 H2O + H(+). It carries out the reaction L-glutamine + H2O = L-glutamate + NH4(+). It functions in the pathway cofactor biosynthesis; pyridoxal 5'-phosphate biosynthesis. Functionally, catalyzes the hydrolysis of glutamine to glutamate and ammonia as part of the biosynthesis of pyridoxal 5'-phosphate. The resulting ammonia molecule is channeled to the active site of PdxS. The protein is Pyridoxal 5'-phosphate synthase subunit PdxT of Methanosarcina acetivorans (strain ATCC 35395 / DSM 2834 / JCM 12185 / C2A).